We begin with the raw amino-acid sequence, 275 residues long: LexA repressor (275 aa).

Residues 1–50 (MKRSTPRPARSQAALTTSSEESPDRVERGGDGVATVTDFPDGPPDETGLT) form a disordered region. The H-T-H motif DNA-binding region spans 73–93 (MREIGEAVGLTSTSSVAHQLM). The interval 114-151 (RSAESAVPDASAGHSPAADRAPSARRPPRGPSPIDSNP) is disordered. Catalysis depends on for autocatalytic cleavage activity residues Ser-199 and Lys-236.

This sequence belongs to the peptidase S24 family. In terms of assembly, homodimer.

The enzyme catalyses Hydrolysis of Ala-|-Gly bond in repressor LexA.. In terms of biological role, represses a number of genes involved in the response to DNA damage (SOS response), including recA and lexA. In the presence of single-stranded DNA, RecA interacts with LexA causing an autocatalytic cleavage which disrupts the DNA-binding part of LexA, leading to derepression of the SOS regulon and eventually DNA repair. The protein is LexA repressor of Acidothermus cellulolyticus (strain ATCC 43068 / DSM 8971 / 11B).